The following is an 874-amino-acid chain: Probable inorganic carbon transporter subunit DabA (874 aa).

The Zn(2+) site is built by C398, D400, H580, and C595.

This sequence belongs to the inorganic carbon transporter (TC 9.A.2) DabA family. In terms of assembly, forms a complex with DabB. It depends on Zn(2+) as a cofactor.

It localises to the cell membrane. Its function is as follows. Part of an energy-coupled inorganic carbon pump. The protein is Probable inorganic carbon transporter subunit DabA of Bacillus cereus (strain Q1).